The sequence spans 327 residues: Lipoyl synthase (327 aa).

[4Fe-4S] cluster-binding residues include cysteine 74, cysteine 79, cysteine 85, cysteine 100, cysteine 104, cysteine 107, and serine 314. One can recognise a Radical SAM core domain in the interval 86 to 303 (FSGGTATFMI…AEEGERMGFK (218 aa)).

The protein belongs to the radical SAM superfamily. Lipoyl synthase family. The cofactor is [4Fe-4S] cluster.

The protein resides in the cytoplasm. The catalysed reaction is [[Fe-S] cluster scaffold protein carrying a second [4Fe-4S](2+) cluster] + N(6)-octanoyl-L-lysyl-[protein] + 2 oxidized [2Fe-2S]-[ferredoxin] + 2 S-adenosyl-L-methionine + 4 H(+) = [[Fe-S] cluster scaffold protein] + N(6)-[(R)-dihydrolipoyl]-L-lysyl-[protein] + 4 Fe(3+) + 2 hydrogen sulfide + 2 5'-deoxyadenosine + 2 L-methionine + 2 reduced [2Fe-2S]-[ferredoxin]. The protein operates within protein modification; protein lipoylation via endogenous pathway; protein N(6)-(lipoyl)lysine from octanoyl-[acyl-carrier-protein]: step 2/2. Catalyzes the radical-mediated insertion of two sulfur atoms into the C-6 and C-8 positions of the octanoyl moiety bound to the lipoyl domains of lipoate-dependent enzymes, thereby converting the octanoylated domains into lipoylated derivatives. The polypeptide is Lipoyl synthase (Pseudomonas paraeruginosa (strain DSM 24068 / PA7) (Pseudomonas aeruginosa (strain PA7))).